The sequence spans 629 residues: tRNA uridine 5-carboxymethylaminomethyl modification enzyme MnmG (629 aa).

FAD is bound by residues G18–G23, V130, and S188. G280–F294 serves as a coordination point for NAD(+). Q377 is a binding site for FAD.

Belongs to the MnmG family. As to quaternary structure, homodimer. Heterotetramer of two MnmE and two MnmG subunits. FAD is required as a cofactor.

It localises to the cytoplasm. NAD-binding protein involved in the addition of a carboxymethylaminomethyl (cmnm) group at the wobble position (U34) of certain tRNAs, forming tRNA-cmnm(5)s(2)U34. The chain is tRNA uridine 5-carboxymethylaminomethyl modification enzyme MnmG from Granulibacter bethesdensis (strain ATCC BAA-1260 / CGDNIH1).